A 226-amino-acid chain; its full sequence is Cell division protein SepF (226 aa).

The disordered stretch occupies residues Arg20–Asn116. Basic and acidic residues predominate over residues Tyr22 to Glu44. Residues Asp45–Ala56 show a composition bias toward acidic residues. Basic and acidic residues predominate over residues Arg62 to Ser95. Residues Arg97–Tyr111 show a composition bias toward polar residues.

It belongs to the SepF family. In terms of assembly, homodimer. Interacts with FtsZ.

The protein resides in the cytoplasm. Functionally, cell division protein that is part of the divisome complex and is recruited early to the Z-ring. Probably stimulates Z-ring formation, perhaps through the cross-linking of FtsZ protofilaments. Its function overlaps with FtsA. The protein is Cell division protein SepF of Salinispora arenicola (strain CNS-205).